The following is a 410-amino-acid chain: Protein CNPPD1 (410 aa).

A helical membrane pass occupies residues 233-253 (CLLAVAYVSSVALAVASVAVI).

The protein belongs to the CNPPD1 family.

Its subcellular location is the membrane. The protein is Protein CNPPD1 (CNPPD1) of Homo sapiens (Human).